The chain runs to 141 residues: Myosin regulatory light chain cdc4 (141 aa).

A phosphoserine mark is found at S2 and S6. EF-hand domains follow at residues T3–N38, G74–K109, and K109–N141. Ca(2+) contacts are provided by D87, D89, T91, M93, and E98.

Binds to myosin II chains myo2 and myo3. Interacts with vps27 and a PI 4-kinase pik1. Post-translationally, phosphorylated on either Ser-2 or Ser-6 but not both. Phosphorylation is not essential for the function of the protein.

The protein localises to the cytoplasm. Involved in cytokinesis. Required for the formation and function of the contractile ring. This Schizosaccharomyces pombe (strain 972 / ATCC 24843) (Fission yeast) protein is Myosin regulatory light chain cdc4 (cdc4).